Consider the following 435-residue polypeptide: 5-methylthioadenosine/S-adenosylhomocysteine deaminase (435 aa).

Residues His65 and His67 each coordinate Zn(2+). Substrate contacts are provided by Glu94, Arg150, and His189. Position 216 (His216) interacts with Zn(2+). The substrate site is built by Glu219 and Asp304. Asp304 provides a ligand contact to Zn(2+).

This sequence belongs to the metallo-dependent hydrolases superfamily. MTA/SAH deaminase family. Requires Zn(2+) as cofactor.

It carries out the reaction S-adenosyl-L-homocysteine + H2O + H(+) = S-inosyl-L-homocysteine + NH4(+). The enzyme catalyses S-methyl-5'-thioadenosine + H2O + H(+) = S-methyl-5'-thioinosine + NH4(+). Catalyzes the deamination of 5-methylthioadenosine and S-adenosyl-L-homocysteine into 5-methylthioinosine and S-inosyl-L-homocysteine, respectively. Is also able to deaminate adenosine. The protein is 5-methylthioadenosine/S-adenosylhomocysteine deaminase of Bacillus cytotoxicus (strain DSM 22905 / CIP 110041 / 391-98 / NVH 391-98).